Consider the following 225-residue polypeptide: NAD(P)H-quinone oxidoreductase subunit K, chloroplastic (225 aa).

[4Fe-4S] cluster contacts are provided by Cys-43, Cys-44, Cys-108, and Cys-139.

This sequence belongs to the complex I 20 kDa subunit family. In terms of assembly, NDH is composed of at least 16 different subunits, 5 of which are encoded in the nucleus. [4Fe-4S] cluster serves as cofactor.

The protein localises to the plastid. It is found in the chloroplast thylakoid membrane. The catalysed reaction is a plastoquinone + NADH + (n+1) H(+)(in) = a plastoquinol + NAD(+) + n H(+)(out). The enzyme catalyses a plastoquinone + NADPH + (n+1) H(+)(in) = a plastoquinol + NADP(+) + n H(+)(out). NDH shuttles electrons from NAD(P)H:plastoquinone, via FMN and iron-sulfur (Fe-S) centers, to quinones in the photosynthetic chain and possibly in a chloroplast respiratory chain. The immediate electron acceptor for the enzyme in this species is believed to be plastoquinone. Couples the redox reaction to proton translocation, and thus conserves the redox energy in a proton gradient. In Capsella bursa-pastoris (Shepherd's purse), this protein is NAD(P)H-quinone oxidoreductase subunit K, chloroplastic.